A 1193-amino-acid chain; its full sequence is uncharacterized protein (1193 aa).

Residues 1–25 (MKIKFINYLLLFFIIFLNYNGFVKS) form the signal peptide. The Extracellular portion of the chain corresponds to 26–1172 (DCYQELDLVL…PQDPSDELST (1147 aa)). N-linked (GlcNAc...) asparagine glycosylation is found at N90, N183, N226, N265, N281, N345, N357, N436, N516, N552, N583, N627, N712, N765, N822, N938, N1038, and N1092. A helical membrane pass occupies residues 1173-1193 (SSFVQVNLLFLSILIFTIFIF).

It is found in the membrane. This is an uncharacterized protein from Dictyostelium discoideum (Social amoeba).